Reading from the N-terminus, the 153-residue chain is Aspartate carbamoyltransferase regulatory chain (153 aa).

Zn(2+) contacts are provided by Cys109, Cys114, Cys138, and Cys141.

Belongs to the PyrI family. As to quaternary structure, contains catalytic and regulatory chains. Zn(2+) is required as a cofactor.

Involved in allosteric regulation of aspartate carbamoyltransferase. This Escherichia coli O7:K1 (strain IAI39 / ExPEC) protein is Aspartate carbamoyltransferase regulatory chain.